The following is an 889-amino-acid chain: MGSCFSLQVSDQTLNRIFNCLIGKSYIRTLEKNLRALQREMEDLRAIQHEVQNKVARDEARHQRRLEAVQVWLDRVNSVDIECKDLLSVTPVELQKLCLCGLCSKYVCSSYKYGKKVFLLLEEVKKLNSEGNFDEVSQPPPRSEVEERPTQPTIGQEDMLEKAWNRLMEDGVGIMGLHGMGGVGKTTLFKKIHNKFAEIGGTFDIVIWIVVSKGVMISKLQEDIAEKLHLCDDLWKNKNESDKATDIHRVLKGKRFVLMLDDIWEKVDLEAIGIPYPSEVNKCKVAFTTRSREVCGEMGDHKPMQVNCLEPEDAWELFKNKVGDNTLSSDPVIVELAREVAQKCRGLPLALNVIGETMSSKTMVQEWEHAIHVFNTSAAEFSDMQNKILPILKYSYDSLGDEHIKSCFLYCALFPEDGEIYNEKLIDYWICEGFIGEDQVIKRARNKGYAMLGTLTRANLLTKVGTYYCVMHDVVREMALWIASDFGKQKENFVVQAGVGLHEIPKVKDWGAVRKMSLMDNDIEEITCESKCSELTTLFLQSNKLKNLPGAFIRYMQKLVVLDLSYNRDFNKLPEQISGLVSLQFLDLSNTSIEHMPIGLKELKKLTFLDLTYTDRLCSISGISRLLSLRLLRLLGSKVHGDASVLKELQQLQNLQELAITVSAELISLDQRLAKLISNLCIEGFLQKPFDLSFLASMENLSSLRVENSYFSEIKCRESETESSYLRINPKIPCFTNLSRLEIMKCHSMKDLTWILFAPNLVVLLIEDSREVGEIINKEKATNLTSITPFLKLEWLILYNLPKLESIYWSPLPFPVLLTMDVSNCPKLRKLPLNATSVSKVEEFEIHMYPPPEQENELEWEDDDTKNRFLPSIKPYKYFVYPGMSFLTV.

The stretch at 19 to 64 forms a coiled coil; that stretch reads NCLIGKSYIRTLEKNLRALQREMEDLRAIQHEVQNKVARDEARHQR. The segment at 131–152 is disordered; the sequence is GNFDEVSQPPPRSEVEERPTQP. One can recognise an NB-ARC domain in the interval 137-440; it reads SQPPPRSEVE…CEGFIGEDQV (304 aa). 179 to 186 is a binding site for ATP; sequence GMGGVGKT. LRR repeat units follow at residues 510–532, 533–555, 557–580, 581–603, 604–625, 626–652, 653–676, 698–721, and 825–848; these read WGAV…ESKC, SELT…FIRY, QKLV…ISGL, VSLQ…LKEL, KKLT…GISR, LLSL…LQQL, QNLQ…LAKL, MENL…ESET, and CPKL…EIHM.

This sequence belongs to the disease resistance NB-LRR family. In terms of assembly, interacts with RPT2A.

In terms of biological role, involved in disease resistance via the salicylic acid (SA) signaling pathway. Involved in shoot architecture development via the cytokinin signaling pathway. The protein is Disease resistance protein UNI of Arabidopsis thaliana (Mouse-ear cress).